The primary structure comprises 326 residues: Putative UPF0725 protein At1g28500 (326 aa).

Residues 301-320 (KDTEQRSKTRQSEEKVESSQ) show a composition bias toward basic and acidic residues. The interval 301–326 (KDTEQRSKTRQSEEKVESSQKRSRLC) is disordered.

This sequence belongs to the UPF0725 (EMB2204) family.

The sequence is that of Putative UPF0725 protein At1g28500 from Arabidopsis thaliana (Mouse-ear cress).